A 216-amino-acid polypeptide reads, in one-letter code: Transmembrane emp24 domain-containing protein eca (216 aa).

A signal peptide spans 1-20 (MRDQFISLALILCVLHSACG). Topologically, residues 21 to 182 (LYFHISETER…FRHTSESTNS (162 aa)) are lumenal. In terms of domain architecture, GOLD spans 30-126 (RKCFIEEVPD…QLRVHLDIQV (97 aa)). Residues 134–164 (ANVAQKEKLTELQLRIRQLLDQVEQITKEQN) adopt a coiled-coil conformation. A helical transmembrane segment spans residues 183-203 (RVLWWSLAQTVVLVCMGFWQM). Topologically, residues 204–216 (RHLKSFFEAKKLV) are cytoplasmic. The short motif at 213–216 (KKLV) is the Prevents secretion from ER element.

Belongs to the EMP24/GP25L family.

It localises to the endoplasmic reticulum membrane. In terms of biological role, eca and bai are essential, though not redundant, for dorsoventral patterning of the embryo. Specifically required during early embryogenesis for the activity of maternal tkv, while the zygotic tkv is not affected. Involved in Golgi organization. This Drosophila simulans (Fruit fly) protein is Transmembrane emp24 domain-containing protein eca.